Here is a 153-residue protein sequence, read N- to C-terminus: 3-hydroxyacyl-[acyl-carrier-protein] dehydratase FabZ (153 aa).

Histidine 54 is a catalytic residue.

The protein belongs to the thioester dehydratase family. FabZ subfamily.

The protein resides in the cytoplasm. It catalyses the reaction a (3R)-hydroxyacyl-[ACP] = a (2E)-enoyl-[ACP] + H2O. Involved in unsaturated fatty acids biosynthesis. Catalyzes the dehydration of short chain beta-hydroxyacyl-ACPs and long chain saturated and unsaturated beta-hydroxyacyl-ACPs. In Chlamydia trachomatis serovar L2 (strain ATCC VR-902B / DSM 19102 / 434/Bu), this protein is 3-hydroxyacyl-[acyl-carrier-protein] dehydratase FabZ.